Reading from the N-terminus, the 1211-residue chain is DNA-directed RNA polymerase subunit beta' (1211 aa).

Residues cysteine 60, cysteine 62, cysteine 75, and cysteine 78 each coordinate Zn(2+). Residues aspartate 450, aspartate 452, and aspartate 454 each contribute to the Mg(2+) site. Cysteine 819, cysteine 893, cysteine 900, and cysteine 903 together coordinate Zn(2+).

It belongs to the RNA polymerase beta' chain family. As to quaternary structure, the RNAP catalytic core consists of 2 alpha, 1 beta, 1 beta' and 1 omega subunit. When a sigma factor is associated with the core the holoenzyme is formed, which can initiate transcription. Mg(2+) serves as cofactor. Requires Zn(2+) as cofactor.

The enzyme catalyses RNA(n) + a ribonucleoside 5'-triphosphate = RNA(n+1) + diphosphate. In terms of biological role, DNA-dependent RNA polymerase catalyzes the transcription of DNA into RNA using the four ribonucleoside triphosphates as substrates. This Streptococcus equi subsp. equi (strain 4047) protein is DNA-directed RNA polymerase subunit beta'.